A 494-amino-acid chain; its full sequence is MPGTPSLYAAIDLGSNSFHMLVVREVAGSIQTLTRVKRKVRLAAGLGADNALSADAMERGWQCLRLFAERLQDIPPSQIRVVATATLRLATNADVFVARAQEILGCPVQVIAGEEEARLIYQGVAHTTGGADRRLVVDIGGASTELVTGTGARATSLFSLPMGCVTFLERFFTDRSLTQEHFASAEQAARDILQPVIAQLRGQGWKICVGASGTVQALQEIMMAQGMDERITLAKLQQLKARAIHCGRLEELEIEGLTLERALVFPSGLAILIAIFSELEIECMTLAGGALREGLVYGMLHLAVDQDIRNRTLKNIQRRFMVDIAQAGRVAQLAERFAVSVEREWALDDLSRALLHSASLLHEVGLAVDFKRAPQHAAYLVNNLDLPGFTPAQKKLLATLLLNQTGTVDLPALQQQNAVPLRVAERLCRLLRLAIIFASRRRDDMLPDVTLTAHDDTLTASLPQDWLSVHPLGAEMLEQEQLWQSYVHWQLDVK.

Belongs to the GppA/Ppx family. GppA subfamily.

The catalysed reaction is guanosine 3'-diphosphate 5'-triphosphate + H2O = guanosine 3',5'-bis(diphosphate) + phosphate + H(+). It functions in the pathway purine metabolism; ppGpp biosynthesis; ppGpp from GTP: step 2/2. Catalyzes the conversion of pppGpp to ppGpp. Guanosine pentaphosphate (pppGpp) is a cytoplasmic signaling molecule which together with ppGpp controls the 'stringent response', an adaptive process that allows bacteria to respond to amino acid starvation, resulting in the coordinated regulation of numerous cellular activities. The polypeptide is Guanosine-5'-triphosphate,3'-diphosphate pyrophosphatase (Cronobacter sakazakii (strain ATCC BAA-894) (Enterobacter sakazakii)).